The following is an 81-amino-acid chain: Small ribosomal subunit protein bS16 (81 aa).

This sequence belongs to the bacterial ribosomal protein bS16 family.

The chain is Small ribosomal subunit protein bS16 from Nautilia profundicola (strain ATCC BAA-1463 / DSM 18972 / AmH).